The sequence spans 526 residues: Nucleolar complex protein 4 homolog A (526 aa).

3 consecutive transmembrane segments (helical) span residues 307-327 (AAYD…FILI), 358-378 (FFHL…LVAA), and 386-406 (LALT…CNLI).

It belongs to the CBF/MAK21 family.

The protein localises to the nucleus membrane. Its subcellular location is the nucleus. It localises to the nucleolus. The chain is Nucleolar complex protein 4 homolog A (noc4l-a) from Xenopus laevis (African clawed frog).